Reading from the N-terminus, the 729-residue chain is Beta-galactosidase 4 (729 aa).

Residues 1–35 (MAPAPTPAAAAGRRVAVLAAALVAASLAASVGVAN) form the signal peptide. The active-site Proton donor is the glutamate 194. Catalysis depends on glutamate 263, which acts as the Nucleophile.

Belongs to the glycosyl hydrolase 35 family.

Its subcellular location is the secreted. The protein localises to the extracellular space. It localises to the apoplast. The catalysed reaction is Hydrolysis of terminal non-reducing beta-D-galactose residues in beta-D-galactosides.. The sequence is that of Beta-galactosidase 4 from Oryza sativa subsp. japonica (Rice).